The sequence spans 471 residues: UDP-N-acetylmuramate--L-alanine ligase (471 aa).

Residue Gly112–Thr118 coordinates ATP.

The protein belongs to the MurCDEF family.

It localises to the cytoplasm. The catalysed reaction is UDP-N-acetyl-alpha-D-muramate + L-alanine + ATP = UDP-N-acetyl-alpha-D-muramoyl-L-alanine + ADP + phosphate + H(+). Its pathway is cell wall biogenesis; peptidoglycan biosynthesis. Functionally, cell wall formation. This chain is UDP-N-acetylmuramate--L-alanine ligase, found in Cupriavidus metallidurans (strain ATCC 43123 / DSM 2839 / NBRC 102507 / CH34) (Ralstonia metallidurans).